A 489-amino-acid chain; its full sequence is Tandem C2 domains nuclear protein (489 aa).

A phosphoserine mark is found at Ser82, Ser155, Ser167, Ser173, and Ser210. Positions 189-214 are disordered; the sequence is DSFSSVPSSSSSRKNSQGSNRSLDTI. Low complexity predominate over residues 191–210; it reads FSSVPSSSSSRKNSQGSNRS. Thr213 and Thr215 each carry phosphothreonine. A Phosphoserine modification is found at Ser217. C2 domains lie at 222 to 341 and 343 to 470; these read DLGR…SLEI and APSK…NQWK. Residues 446 to 448 carry the Nuclear localization signal motif; the sequence is RRK.

The protein resides in the nucleus. The protein is Tandem C2 domains nuclear protein (Tc2n) of Mus musculus (Mouse).